A 516-amino-acid chain; its full sequence is GMP synthase [glutamine-hydrolyzing] (516 aa).

Positions 8 to 198 (KILILDFGSQ…ALNICKCDAL (191 aa)) constitute a Glutamine amidotransferase type-1 domain. Residue Cys-84 is the Nucleophile of the active site. Active-site residues include His-172 and Glu-174. The GMPS ATP-PPase domain maps to 199 to 391 (WNIENIIEND…LGLPYNMLYR (193 aa)). ATP is bound at residue 226–232 (SGGVDSS).

Homodimer.

It carries out the reaction XMP + L-glutamine + ATP + H2O = GMP + L-glutamate + AMP + diphosphate + 2 H(+). It functions in the pathway purine metabolism; GMP biosynthesis; GMP from XMP (L-Gln route): step 1/1. In terms of biological role, catalyzes the synthesis of GMP from XMP. This is GMP synthase [glutamine-hydrolyzing] from Francisella philomiragia subsp. philomiragia (strain ATCC 25017 / CCUG 19701 / FSC 153 / O#319-036).